Consider the following 499-residue polypeptide: Lysine--tRNA ligase (499 aa).

Mg(2+) is bound by residues E409 and E416.

It belongs to the class-II aminoacyl-tRNA synthetase family. Homodimer. Mg(2+) serves as cofactor.

The protein resides in the cytoplasm. It catalyses the reaction tRNA(Lys) + L-lysine + ATP = L-lysyl-tRNA(Lys) + AMP + diphosphate. This is Lysine--tRNA ligase from Pseudomonas fluorescens (strain Pf0-1).